A 396-amino-acid chain; its full sequence is Odorant receptor 49a (396 aa).

Residues 1-6 (MEKLRS) are Cytoplasmic-facing. A helical transmembrane segment spans residues 7 to 27 (YEDFIFMANMMFKTLGYDLFH). Topologically, residues 28–34 (TPKPWWR) are extracellular. Residues 35 to 55 (YLLVRGYFVLCTISNFYEASM) traverse the membrane as a helical segment. At 56–70 (VTTRIIEWESLAGSP) the chain is on the cytoplasmic side. A helical membrane pass occupies residues 71–91 (SKIMRQGLHFFYMLSSQLKFI). The Extracellular portion of the chain corresponds to 92 to 141 (TFMINRKRLLQLSHRLKELYPHKEQNQRKYEVNKYYLSCSTRNVLYVYYF). A helical transmembrane segment spans residues 142–162 (VMVVMALEPLVQSCIMYLIGF). Residues 163-209 (GKADFTYKRIFPTRLTFDSEKPLGYVLAYVIDFTYSQFIVNVSLGTD) are Cytoplasmic-facing. The helical transmembrane segment at 210 to 230 (LWMMCVSSQISMHLGYLANML) threads the bilayer. Residues 231-266 (ASIRPSPETEQQDCDFLASIIKRHQLMIRLQKDVNY) lie on the Extracellular side of the membrane. The chain crosses the membrane as a helical span at residues 267–287 (VFGLLLASNLFTTSCLLCCMA). Residues 288–296 (YYTVVEGFN) lie on the Cytoplasmic side of the membrane. A helical transmembrane segment spans residues 297 to 317 (WEGISYMMLFASVAAQFYVVS). Residues 318 to 396 (SHGQMLIDLS…FAVIRQTVEK (79 aa)) are Extracellular-facing.

This sequence belongs to the insect chemoreceptor superfamily. Heteromeric odorant receptor channel (TC 1.A.69) family. Or49a subfamily. In terms of assembly, interacts with Orco. Complexes exist early in the endomembrane system in olfactory sensory neurons (OSNs), coupling these complexes to the conserved ciliary trafficking pathway.

It is found in the cell membrane. In terms of biological role, odorant receptor which mediates acceptance or avoidance behavior, depending on its substrates. The odorant receptor repertoire encodes a large collection of odor stimuli that vary widely in identity, intensity, and duration. May form a complex with Orco to form odorant-sensing units, providing sensitive and prolonged odorant signaling and calcium permeability. Involved in the behavioral responses to butanol and 2-heptanone. This is Odorant receptor 49a (Or49a) from Drosophila melanogaster (Fruit fly).